We begin with the raw amino-acid sequence, 555 residues long: Xylulose kinase (555 aa).

Substrate-binding residues include His88, Arg158, Asp274, and Asn275. Residues Trp357, 455 to 456 (GA), and Asn459 each bind ATP.

Belongs to the FGGY kinase family.

It is found in the cytoplasm. It carries out the reaction D-xylulose + ATP = D-xylulose 5-phosphate + ADP + H(+). This Schizosaccharomyces pombe (strain 972 / ATCC 24843) (Fission yeast) protein is Xylulose kinase.